The chain runs to 404 residues: Tryptophan synthase beta chain (404 aa).

K98 bears the N6-(pyridoxal phosphate)lysine mark.

The protein belongs to the TrpB family. Tetramer of two alpha and two beta chains. The cofactor is pyridoxal 5'-phosphate.

The catalysed reaction is (1S,2R)-1-C-(indol-3-yl)glycerol 3-phosphate + L-serine = D-glyceraldehyde 3-phosphate + L-tryptophan + H2O. It functions in the pathway amino-acid biosynthesis; L-tryptophan biosynthesis; L-tryptophan from chorismate: step 5/5. In terms of biological role, the beta subunit is responsible for the synthesis of L-tryptophan from indole and L-serine. This Rhodopseudomonas palustris (strain BisB18) protein is Tryptophan synthase beta chain.